Here is a 237-residue protein sequence, read N- to C-terminus: tRNA (guanine-N(7)-)-methyltransferase (237 aa).

S-adenosyl-L-methionine-binding residues include Glu68, Glu93, Asp120, and Asp143. Residue Asp143 is part of the active site. Substrate is bound by residues Lys147, Asp179, and 216–219 (TKFE).

It belongs to the class I-like SAM-binding methyltransferase superfamily. TrmB family.

The catalysed reaction is guanosine(46) in tRNA + S-adenosyl-L-methionine = N(7)-methylguanosine(46) in tRNA + S-adenosyl-L-homocysteine. Its pathway is tRNA modification; N(7)-methylguanine-tRNA biosynthesis. Catalyzes the formation of N(7)-methylguanine at position 46 (m7G46) in tRNA. In Shewanella piezotolerans (strain WP3 / JCM 13877), this protein is tRNA (guanine-N(7)-)-methyltransferase.